Reading from the N-terminus, the 233-residue chain is MTSRPLSPLAIFDLDGTLVDTAADLVSSLNHTIAAAGLAPVTYDDLTHLVGQGARVMIKRAFALRETELPEADIDPLYERFITHYRAEMPGESRPYPGIIETLDALSQAGITLAVCTNKTEILAVPLLEKLGLTRYFAAITCGDTFAFRKPDARHILGTIEKAGGDVQRSIMVGDSINDILAARNAAVPSIGVTFGYTDVPMVELEPDVVIDDFAALTPALFEKLVSKGAAAA.

Catalysis depends on D13, which acts as the Nucleophile. Mg(2+) contacts are provided by D13, D15, and D175.

Belongs to the HAD-like hydrolase superfamily. CbbY/CbbZ/Gph/YieH family. Mg(2+) is required as a cofactor.

It catalyses the reaction 2-phosphoglycolate + H2O = glycolate + phosphate. It participates in organic acid metabolism; glycolate biosynthesis; glycolate from 2-phosphoglycolate: step 1/1. Specifically catalyzes the dephosphorylation of 2-phosphoglycolate. Is involved in the dissimilation of the intracellular 2-phosphoglycolate formed during the DNA repair of 3'-phosphoglycolate ends, a major class of DNA lesions induced by oxidative stress. This is Phosphoglycolate phosphatase from Agrobacterium fabrum (strain C58 / ATCC 33970) (Agrobacterium tumefaciens (strain C58)).